The primary structure comprises 389 residues: Zinc finger C2HC domain-containing protein 1C homolog (389 aa).

Disordered stretches follow at residues 16-44 (MLPH…SQQS) and 84-115 (SYPH…GPQS). Polar residues-rich tracts occupy residues 35–44 (YEQGDSSQQS) and 90–102 (GISQ…DSQG). A coiled-coil region spans residues 211-266 (VQIRRLEAAGESLEEEIRRKQILLRGKLKKTEEELRRIQMQKEQAKENENRELQKI). Disordered regions lie at residues 301 to 320 (REDE…QLSD) and 343 to 389 (SELS…PQLG). Polar residues predominate over residues 307–317 (GRSQQNSSPFQ). The span at 368-382 (SSLSMAPDSSGSSGS) shows a compositional bias: low complexity.

This sequence belongs to the ZC2HC1 family.

In Pongo abelii (Sumatran orangutan), this protein is Zinc finger C2HC domain-containing protein 1C homolog (ZC2HC1C).